The primary structure comprises 571 residues: uncharacterized protein (571 aa).

Helical transmembrane passes span valine 5 to valine 27, threonine 34 to threonine 56, isoleucine 61 to alanine 79, leucine 92 to phenylalanine 114, threonine 161 to phenylalanine 183, phenylalanine 391 to serine 408, phenylalanine 412 to isoleucine 434, leucine 455 to threonine 474, phenylalanine 484 to leucine 506, valine 513 to leucine 532, and serine 547 to isoleucine 569.

The protein belongs to the AAE transporter (TC 2.A.81) family.

The protein localises to the cell membrane. This is an uncharacterized protein from Francisella tularensis subsp. tularensis (strain SCHU S4 / Schu 4).